A 377-amino-acid chain; its full sequence is tRNA(Met) cytidine acetate ligase (377 aa).

ATP contacts are provided by residues 7–20 (VVEY…HRYH), G101, N151, and R176.

Belongs to the TmcAL family.

The protein localises to the cytoplasm. It catalyses the reaction cytidine(34) in elongator tRNA(Met) + acetate + ATP = N(4)-acetylcytidine(34) in elongator tRNA(Met) + AMP + diphosphate. In terms of biological role, catalyzes the formation of N(4)-acetylcytidine (ac(4)C) at the wobble position of elongator tRNA(Met), using acetate and ATP as substrates. First activates an acetate ion to form acetyladenylate (Ac-AMP) and then transfers the acetyl group to tRNA to form ac(4)C34. The protein is tRNA(Met) cytidine acetate ligase of Limosilactobacillus reuteri (strain DSM 20016) (Lactobacillus reuteri).